A 353-amino-acid polypeptide reads, in one-letter code: Iron(III) enterobactin esterase (353 aa).

Belongs to the Fes family.

The protein localises to the cytoplasm. The catalysed reaction is Fe(III)-enterobactin + 3 H2O + H(+) = Fe(III)-[N-(2,3-dihydroxybenzoyl)-L-serine] + 2 N-(2,3-dihydroxybenzoyl)-L-serine. The enzyme catalyses Fe(III)-enterobactin + H2O = Fe(III)-[N-(2,3-dihydroxybenzoyl)-L-serine]3 + H(+). It carries out the reaction Fe(III)-[N-(2,3-dihydroxybenzoyl)-L-serine]3 + H2O + H(+) = Fe(III)-[N-(2,3-dihydroxybenzoyl)-L-serine]2 + N-(2,3-dihydroxybenzoyl)-L-serine. It catalyses the reaction Fe(III)-[N-(2,3-dihydroxybenzoyl)-L-serine]2 + H2O + H(+) = Fe(III)-[N-(2,3-dihydroxybenzoyl)-L-serine] + N-(2,3-dihydroxybenzoyl)-L-serine. Its function is as follows. Catalyzes the hydrolysis of ferric enterobactin (Fe-Ent). Is responsible for the release of iron from ferric enterobactin. The sequence is that of Iron(III) enterobactin esterase from Yersinia enterocolitica.